Here is a 280-residue protein sequence, read N- to C-terminus: Shikimate dehydrogenase (NADP(+)) (280 aa).

Shikimate is bound by residues 20 to 22 (SLS) and Thr-67. The active-site Proton acceptor is the Lys-71. The shikimate site is built by Asn-92 and Asp-107. NADP(+) contacts are provided by residues 131–135 (GAGGA) and Gly-220. Tyr-222 lines the shikimate pocket. An NADP(+)-binding site is contributed by Gly-243.

It belongs to the shikimate dehydrogenase family. Homodimer.

It carries out the reaction shikimate + NADP(+) = 3-dehydroshikimate + NADPH + H(+). It functions in the pathway metabolic intermediate biosynthesis; chorismate biosynthesis; chorismate from D-erythrose 4-phosphate and phosphoenolpyruvate: step 4/7. In terms of biological role, involved in the biosynthesis of the chorismate, which leads to the biosynthesis of aromatic amino acids. Catalyzes the reversible NADPH linked reduction of 3-dehydroshikimate (DHSA) to yield shikimate (SA). The protein is Shikimate dehydrogenase (NADP(+)) of Maricaulis maris (strain MCS10) (Caulobacter maris).